A 312-amino-acid chain; its full sequence is Olfactory receptor 6B2 (312 aa).

Residues 1–25 (MSGENVTKVSTFILVGLPTAPGLQY) lie on the Extracellular side of the membrane. The N-linked (GlcNAc...) asparagine glycan is linked to asparagine 5. A helical transmembrane segment spans residues 26–46 (LLFLLFLLTYLFVLVENLAII). Residues 47–54 (LIVWSSTS) lie on the Cytoplasmic side of the membrane. The helical transmembrane segment at 55–75 (LHRPMYYFLSSMSFLEIWYVS) threads the bilayer. The Extracellular portion of the chain corresponds to 76–99 (DITPKMLEGFLLQQKRISFVGCMT). Cysteines 97 and 189 form a disulfide. Residues 100 to 120 (QLYFFSSLVCTECVLLASMAY) form a helical membrane-spanning segment. The Cytoplasmic segment spans residues 121–139 (DRYVAICHPLRYHVLVTPG). Residues 140-160 (LCLQLVGFSFVSGFTISMIKV) form a helical membrane-spanning segment. Over 161 to 196 (CFISSVTFCGSNVLNHFFCDISPILKLACTDFSTAE) the chain is Extracellular. A helical membrane pass occupies residues 197 to 217 (LVDFILAFIILVFPLLATILS). At 218-237 (YWHITLAVLRIPSATGCWRA) the chain is on the cytoplasmic side. Residues 238–258 (FSTCASHLTVVTVFYTALLFM) form a helical membrane-spanning segment. Residues 259–271 (YVRPQAIDSQSSN) lie on the Extracellular side of the membrane. A helical transmembrane segment spans residues 272 to 292 (KLISAVYTVVTPIINPLIYCL). The Cytoplasmic segment spans residues 293-312 (RNKEFKDALKKALGLGQTSH).

This sequence belongs to the G-protein coupled receptor 1 family.

It is found in the cell membrane. Functionally, odorant receptor. The polypeptide is Olfactory receptor 6B2 (OR6B2) (Homo sapiens (Human)).